The primary structure comprises 878 residues: Alanine--tRNA ligase (878 aa).

Residues H566, H570, C668, and H672 each coordinate Zn(2+). The tract at residues G846–A866 is disordered.

This sequence belongs to the class-II aminoacyl-tRNA synthetase family. Zn(2+) serves as cofactor.

The protein localises to the cytoplasm. The catalysed reaction is tRNA(Ala) + L-alanine + ATP = L-alanyl-tRNA(Ala) + AMP + diphosphate. Catalyzes the attachment of alanine to tRNA(Ala) in a two-step reaction: alanine is first activated by ATP to form Ala-AMP and then transferred to the acceptor end of tRNA(Ala). Also edits incorrectly charged Ser-tRNA(Ala) and Gly-tRNA(Ala) via its editing domain. The chain is Alanine--tRNA ligase from Bacillus pumilus (strain SAFR-032).